The primary structure comprises 447 residues: tRNA modification GTPase MnmE (447 aa).

Residues R22, E81, and K121 each coordinate (6S)-5-formyl-5,6,7,8-tetrahydrofolate. The region spanning 217-373 is the TrmE-type G domain; that stretch reads GIVLAITGET…LMSEIVSYAE (157 aa). A K(+)-binding site is contributed by N227. Residues 227–232, 246–252, and 271–274 contribute to the GTP site; these read NTGKSS, SDIPGTT, and DTAG. S231 is a binding site for Mg(2+). K(+) is bound by residues S246, I248, and T251. T252 contacts Mg(2+). K447 contacts (6S)-5-formyl-5,6,7,8-tetrahydrofolate.

It belongs to the TRAFAC class TrmE-Era-EngA-EngB-Septin-like GTPase superfamily. TrmE GTPase family. As to quaternary structure, homodimer. Heterotetramer of two MnmE and two MnmG subunits. The cofactor is K(+).

It localises to the cytoplasm. Functionally, exhibits a very high intrinsic GTPase hydrolysis rate. Involved in the addition of a carboxymethylaminomethyl (cmnm) group at the wobble position (U34) of certain tRNAs, forming tRNA-cmnm(5)s(2)U34. The polypeptide is tRNA modification GTPase MnmE (Orientia tsutsugamushi (strain Boryong) (Rickettsia tsutsugamushi)).